Reading from the N-terminus, the 374-residue chain is Gustatory receptor 23a (374 aa).

Topologically, residues 1–6 (MFPPTR) are cytoplasmic. A helical transmembrane segment spans residues 7–27 (VQASSRVVLKIFHFILVAFSL). Residues 28–36 (RSRRLSRLV) are Extracellular-facing. The helical transmembrane segment at 37–57 (LWLQFLGWLTWFISMWTQSVI) threads the bilayer. Topologically, residues 58–72 (YAQTIDCTLDCSLRH) are cytoplasmic. The helical transmembrane segment at 73-93 (ILTFFQTVSHAFIVVTSFLDG) threads the bilayer. Topologically, residues 94–112 (FRIKQDQLDEPIAFEDSDP) are extracellular. The helical transmembrane segment at 113–133 (WLAFTVLAMLVPTLGVEYLVC) threads the bilayer. The Cytoplasmic segment spans residues 134–226 (SNAPEYAFRI…YNDLHYLFVR (93 aa)). A helical membrane pass occupies residues 227-247 (INGYFGGSLLTIIIVHFAIFV). The Extracellular segment spans residues 248 to 263 (SNSYWLFVDIRTRPWR). The chain crosses the membrane as a helical span at residues 264-284 (IYAILLNLGFIFNVALQMAAA). The Cytoplasmic portion of the chain corresponds to 285–343 (CWHCQQSYNLGRQIGCLISKLVKPQGSKLYNDLVSEFSLQTLHQRFVVTAKDFFSLNLH). Residues 344–364 (LLSSMFAAVVTYLVILIQFMF) traverse the membrane as a helical segment. The Extracellular portion of the chain corresponds to 365 to 374 (AERSSTRGSG).

Belongs to the insect chemoreceptor superfamily. Gustatory receptor (GR) family. Gr2a subfamily. As to expression, expressed in the adult labellar chemosensory neurons and labral sense organ. Expressed in neurons of the dorsal pharyngeal sense organ of larvae.

The protein localises to the cell membrane. Functionally, probable gustatory receptor which mediates acceptance or avoidance behavior, depending on its substrates. This chain is Gustatory receptor 23a (Gr23a), found in Drosophila melanogaster (Fruit fly).